Here is a 241-residue protein sequence, read N- to C-terminus: Lipopolysaccharide export system ATP-binding protein LptB (241 aa).

An ABC transporter domain is found at 4–237; it reads LTAKNLAKAY…EHVKRVYLGE (234 aa). 36 to 43 is an ATP binding site; it reads GPNGAGKT.

The protein belongs to the ABC transporter superfamily. Outer membrane lipopolysaccharide export (TC 1.B.42) family. In terms of assembly, component of the lipopolysaccharide transport and assembly complex. The LptBFG transporter is composed of two ATP-binding proteins (LptB) and two transmembrane proteins (LptF and LptG).

The protein resides in the cytoplasm. It localises to the cell inner membrane. In terms of biological role, part of the ABC transporter complex LptBFG involved in the translocation of lipopolysaccharide (LPS) from the inner membrane to the outer membrane. Probably responsible for energy coupling to the transport system. The polypeptide is Lipopolysaccharide export system ATP-binding protein LptB (lptB) (Escherichia coli O157:H7).